Reading from the N-terminus, the 693-residue chain is Polyribonucleotide nucleotidyltransferase (693 aa).

Mg(2+) contacts are provided by Asp-486 and Asp-492. Positions 553 to 612 constitute a KH domain; it reads PRIHTIKINPEKIKDVIGKGGSVIRMLTEETGTTIEIEDDGTVKISAVMQEKAKCAIQRI. The region spanning 622–690 is the S1 motif domain; sequence GSVYTGKVTR…RQGRLRLSIK (69 aa).

It belongs to the polyribonucleotide nucleotidyltransferase family. As to quaternary structure, component of the RNA degradosome, which is a multiprotein complex involved in RNA processing and mRNA degradation. The cofactor is Mg(2+).

Its subcellular location is the cytoplasm. It catalyses the reaction RNA(n+1) + phosphate = RNA(n) + a ribonucleoside 5'-diphosphate. Its function is as follows. Involved in mRNA degradation. Catalyzes the phosphorolysis of single-stranded polyribonucleotides processively in the 3'- to 5'-direction. The protein is Polyribonucleotide nucleotidyltransferase of Buchnera aphidicola subsp. Baizongia pistaciae (strain Bp).